A 171-amino-acid chain; its full sequence is Small ribosomal subunit protein uS5 (171 aa).

The region spanning L12 to V75 is the S5 DRBM domain.

This sequence belongs to the universal ribosomal protein uS5 family. In terms of assembly, part of the 30S ribosomal subunit. Contacts proteins S4 and S8.

Its function is as follows. With S4 and S12 plays an important role in translational accuracy. Located at the back of the 30S subunit body where it stabilizes the conformation of the head with respect to the body. This chain is Small ribosomal subunit protein uS5, found in Buchnera aphidicola subsp. Baizongia pistaciae (strain Bp).